A 101-amino-acid chain; its full sequence is MAKLITSFLLLTILFTFVCLTMSKEAEYHPESYGPGSLKSYQCGGQCTRRCSNTKYHKPCMFFCQKCCAKCLCVPPGTYGNKQVCPCYNNWKTQQGGPKCP.

The first 23 residues, 1–23 (MAKLITSFLLLTILFTFVCLTMS), serve as a signal peptide directing secretion.

This sequence belongs to the GASA family. Post-translationally, six disulfide bonds may be present.

Its subcellular location is the secreted. Its function is as follows. Gibberellin-regulated protein that may function in hormonal controlled steps of development such as seed germination, flowering and seed maturation. The polypeptide is Gibberellin-regulated protein 6 (GASA6) (Arabidopsis thaliana (Mouse-ear cress)).